Here is a 355-residue protein sequence, read N- to C-terminus: UDP-N-acetylglucosamine--N-acetylmuramyl-(pentapeptide) pyrophosphoryl-undecaprenol N-acetylglucosamine transferase (355 aa).

UDP-N-acetyl-alpha-D-glucosamine contacts are provided by residues 15–17, Asn-127, Arg-163, Ser-191, Ile-244, 263–268, and Gln-288; these read TGG and ALTVSE.

This sequence belongs to the glycosyltransferase 28 family. MurG subfamily.

Its subcellular location is the cell inner membrane. The catalysed reaction is di-trans,octa-cis-undecaprenyl diphospho-N-acetyl-alpha-D-muramoyl-L-alanyl-D-glutamyl-meso-2,6-diaminopimeloyl-D-alanyl-D-alanine + UDP-N-acetyl-alpha-D-glucosamine = di-trans,octa-cis-undecaprenyl diphospho-[N-acetyl-alpha-D-glucosaminyl-(1-&gt;4)]-N-acetyl-alpha-D-muramoyl-L-alanyl-D-glutamyl-meso-2,6-diaminopimeloyl-D-alanyl-D-alanine + UDP + H(+). Its pathway is cell wall biogenesis; peptidoglycan biosynthesis. Its function is as follows. Cell wall formation. Catalyzes the transfer of a GlcNAc subunit on undecaprenyl-pyrophosphoryl-MurNAc-pentapeptide (lipid intermediate I) to form undecaprenyl-pyrophosphoryl-MurNAc-(pentapeptide)GlcNAc (lipid intermediate II). The polypeptide is UDP-N-acetylglucosamine--N-acetylmuramyl-(pentapeptide) pyrophosphoryl-undecaprenol N-acetylglucosamine transferase (Escherichia coli O45:K1 (strain S88 / ExPEC)).